The following is a 221-amino-acid chain: Phosphoenolpyruvate guanylyltransferase (221 aa).

3 residues coordinate phosphoenolpyruvate: threonine 154, glycine 169, and serine 172.

It belongs to the CofC family.

The catalysed reaction is phosphoenolpyruvate + GTP + H(+) = enolpyruvoyl-2-diphospho-5'-guanosine + diphosphate. It participates in cofactor biosynthesis; coenzyme F420 biosynthesis. Functionally, guanylyltransferase that catalyzes the activation of phosphoenolpyruvate (PEP) as enolpyruvoyl-2-diphospho-5'-guanosine, via the condensation of PEP with GTP. It is involved in the biosynthesis of coenzyme F420, a hydride carrier cofactor. The chain is Phosphoenolpyruvate guanylyltransferase from Mycolicibacterium smegmatis (strain ATCC 700084 / mc(2)155) (Mycobacterium smegmatis).